The chain runs to 1159 residues: PAN2-PAN3 deadenylation complex catalytic subunit pan2 (1159 aa).

The WD repeat unit spans residues 276 to 315; it reads ANVSFMLGIDISPSGEALAINDAECMVHLWGSPAKIHFNE. The tract at residues 316–451 is linker; sequence MSKEVELADV…GAKLNGEAED (136 aa). The region spanning 452–821 is the USP domain; that stretch reads DPLLKYSNVE…VPCVLAFQVK (370 aa). The region spanning 872–1048 is the Exonuclease domain; the sequence is LDTEFVDLEK…IEDARMALRL (177 aa). 4 residues coordinate a divalent metal cation: aspartate 873, glutamate 875, aspartate 982, and aspartate 1041. The interval 1094 to 1159 is disordered; it reads TAVTMQNTNS…GDFFGGSPLK (66 aa). Residues 1096–1106 are compositionally biased toward polar residues; that stretch reads VTMQNTNSGRN. The span at 1107–1128 shows a compositional bias: low complexity; the sequence is TPTVPDAAGAPAVPASAPTTPG. Gly residues predominate over residues 1143 to 1153; sequence TFSGPGAGDFF.

This sequence belongs to the peptidase C19 family. PAN2 subfamily. In terms of assembly, forms a heterotrimer with an asymmetric homodimer of the regulatory subunit pan3 to form the poly(A)-nuclease (PAN) deadenylation complex. Requires a divalent metal cation as cofactor.

The protein resides in the cytoplasm. The enzyme catalyses Exonucleolytic cleavage of poly(A) to 5'-AMP.. Its activity is regulated as follows. Positively regulated by the regulatory subunit pan3. Functionally, catalytic subunit of the poly(A)-nuclease (PAN) deadenylation complex, one of two cytoplasmic mRNA deadenylases involved in mRNA turnover. PAN specifically shortens poly(A) tails of RNA and the activity is stimulated by poly(A)-binding protein pab1. PAN deadenylation is followed by rapid degradation of the shortened mRNA tails by the CCR4-NOT complex. Deadenylated mRNAs are then degraded by two alternative mechanisms, namely exosome-mediated 3'-5' exonucleolytic degradation, or deadenylation-dependent mRNA decaping and subsequent 5'-3' exonucleolytic degradation by xrn1. May also be involved in post-transcriptional maturation of mRNA poly(A) tails. This Aspergillus terreus (strain NIH 2624 / FGSC A1156) protein is PAN2-PAN3 deadenylation complex catalytic subunit pan2.